Reading from the N-terminus, the 270-residue chain is Structure-specific endonuclease subunit SLX1 (270 aa).

The GIY-YIG domain maps to 9–94 (RFFGVYLLYC…PQASRRLTHV (86 aa)). The SLX1-type zinc finger occupies 182–234 (CSLCARLLQDEEGPLCCPHPGCPLRAHIICLAEEFLQEEPGQLLPLEGHCPSC).

The protein belongs to the SLX1 family. In terms of assembly, forms a heterodimer with SLX4. It depends on a divalent metal cation as a cofactor. As to expression, expressed in testis, colon, bone marrow, brain, thymus and to a lesser extent in heart, kidney, skeletal muscle and spleen.

The protein localises to the nucleus. In terms of biological role, catalytic subunit of the SLX1-SLX4 structure-specific endonuclease that resolves DNA secondary structures generated during DNA repair and recombination. Has endonuclease activity towards branched DNA substrates, introducing single-strand cuts in duplex DNA close to junctions with ss-DNA. Has a preference for 5'-flap structures, and promotes symmetrical cleavage of static and migrating Holliday junctions (HJs). Resolves HJs by generating two pairs of ligatable, nicked duplex products. This is Structure-specific endonuclease subunit SLX1 (Slx1b) from Mus musculus (Mouse).